A 1145-amino-acid polypeptide reads, in one-letter code: TAWTFLKAMQKCSKKREARGSREAPETNFPDTTEESAQQICCTRDSSDSKSVPRSERNKKGIQCQGEGSSRGSQPGQFVGVTYNLEKRPTTIVLINDTPLNVLLDTGADTSVLTTAHYNRLKYRGRKYQGTGIIGVGGNVETFSTPVTIKKKGRHIKTRMLVADIPVTILGRDILQDLGAKLVLAQLSKEIKFRKIELKEGTMGPKIPQWPLTKEKLEGAKETVQRLLSEGKISEASDNNPYNSPIFVIKKRSGKWRLLQDLRELNKTVQVGTEISRGLPHPGGLIKCKHMTVLDIGDAYFTIPLDPEFRPYTAFTIPSINHQEPDKRYVWKCLPQGFVLSPYIYQKTLQEILQPFRERYPEVQLYQYMDDLFVGSNGSKKQHKELIIELRAILQKGFETPDDKLQEVPPYSWLGYQLCPENWKVQKMQLDMVKNPTLNDVQKLMGNITWMSSGVPGLTVKHIAATTKGCLELNQKVIWTEEAQKELEENNEKIKNAQGLQYYNPEEEMLCEVEITKNYEATYVIKQSQGILWAGKKIMKANKGWSTVKNLMLLLQHVATESITRVGKCPTFKVPFTKEQVMWEMQKGWYYSWLPEIVYTHQVVHDDWRMKLVEEPTSGITIYTDGGKQNGEGIAAYVTSNGRTKQKRLGPVTHQVAERMAIQMALEDTRDKQVNIVTDSYYCWKNITEGLGLEGPQNPWWPIIQNIREKEIVYFAWVPGHKGIYGNQLADEAAKIKEEIMLAYQGTQIKEKRDEDAGFDLCVPYDIMIPVSDTKIIPTDVKIQVPPNSFGWVTGKSSMAKQGLLINGGIIDEGYTGEIQVICTNIGKSNIKLIEGQKFAQLIILQHHSNSRQPWDENKISQRGDKGFGSTGVFWVENIQEAQDEHENWHTSPKILARNYKIPLTVAKQITQECPHCTKQGSGPAGCVMRSPNHWQADCTHLDNKIILHFVESNSGYIHATLLSKENALCTSLAILEWARLFSPKSLHTDNGTNFVAEPVVNLLKFLKIAHTTGIPYHPESQGIVERANRTLKEKIQSHRDNTQTLEAALQLALITCNKGRESMGGQTPWEVFITNQAQVIHEKLLLQQAQSSKKFCFYKIPGEHDWKGPTRVLWKGDGAVVVNDEGKGIIAVPLTRTKLLIKPN.

The disordered stretch occupies residues 13-77 (SKKREARGSR…GSSRGSQPGQ (65 aa)). A compositionally biased stretch (polar residues) spans 29-41 (FPDTTEESAQQIC). Residues 45 to 59 (DSSDSKSVPRSERNK) show a composition bias toward basic and acidic residues. The span at 66–76 (GEGSSRGSQPG) shows a compositional bias: polar residues. One can recognise a Peptidase A2 domain in the interval 100 to 174 (LNVLLDTGAD…IPVTILGRDI (75 aa)). Asp-105 is a catalytic residue. The 189-residue stretch at 230 to 418 (EGKISEASDN…PPYSWLGYQL (189 aa)) folds into the Reverse transcriptase domain. The region spanning 616–739 (PTSGITIYTD…ADEAAKIKEE (124 aa)) is the RNase H type-1 domain. An Integrase-type zinc finger spans residues 877-918 (ENIQEAQDEHENWHTSPKILARNYKIPLTVAKQITQECPHCT). 4 residues coordinate Zn(2+): His-886, His-890, Cys-914, and Cys-917. The region spanning 920-1077 (QGSGPAGCVM…TPWEVFITNQ (158 aa)) is the Integrase catalytic domain. Residues 1095 to 1143 (KFCFYKIPGEHDWKGPTRVLWKGDGAVVVNDEGKGIIAVPLTRTKLLIK) constitute a DNA-binding region (integrase-type).

The protein belongs to the retroviral Pol polyprotein family. Post-translationally, specific enzymatic cleavages in vivo yield mature proteins.

The enzyme catalyses Endohydrolysis of RNA in RNA/DNA hybrids. Three different cleavage modes: 1. sequence-specific internal cleavage of RNA. Human immunodeficiency virus type 1 and Moloney murine leukemia virus enzymes prefer to cleave the RNA strand one nucleotide away from the RNA-DNA junction. 2. RNA 5'-end directed cleavage 13-19 nucleotides from the RNA end. 3. DNA 3'-end directed cleavage 15-20 nucleotides away from the primer terminus.. It carries out the reaction 3'-end directed exonucleolytic cleavage of viral RNA-DNA hybrid.. It catalyses the reaction DNA(n) + a 2'-deoxyribonucleoside 5'-triphosphate = DNA(n+1) + diphosphate. Functionally, during replicative cycle of retroviruses, the reverse-transcribed viral DNA is integrated into the host chromosome by the viral integrase enzyme. RNase H activity is associated with the reverse transcriptase. This chain is Pol polyprotein (pol), found in Equus asinus (Donkey).